We begin with the raw amino-acid sequence, 331 residues long: 2-hydroxyacid dehydrogenase homolog (331 aa).

Residues 154–155 (HI), 234–236 (TSR), and aspartate 260 each bind NAD(+). The active site involves arginine 236. Glutamate 265 is an active-site residue. Residue histidine 297 is the Proton donor of the active site. 297–300 (HQAF) serves as a coordination point for NAD(+).

This sequence belongs to the D-isomer specific 2-hydroxyacid dehydrogenase family.

This chain is 2-hydroxyacid dehydrogenase homolog (ddh), found in Zymomonas mobilis subsp. mobilis (strain ATCC 31821 / ZM4 / CP4).